We begin with the raw amino-acid sequence, 501 residues long: Endoglucanase 1 (501 aa).

A signal peptide spans 1 to 29 (MALYLSSSRLITFLSFILLLSNGFSSSSS). D96 acts as the Nucleophile in catalysis. Catalysis depends on residues H422, D473, and E482.

It belongs to the glycosyl hydrolase 9 (cellulase E) family.

Its subcellular location is the secreted. The catalysed reaction is Endohydrolysis of (1-&gt;4)-beta-D-glucosidic linkages in cellulose, lichenin and cereal beta-D-glucans.. The sequence is that of Endoglucanase 1 (CEL2) from Arabidopsis thaliana (Mouse-ear cress).